Consider the following 327-residue polypeptide: Prenyl transferase janC (327 aa).

The helical transmembrane segment at 3–23 (FPGAGPILGAIAVSSCLYFLF) threads the bilayer. Isopentenyl diphosphate-binding residues include Lys-63 and His-96. Mg(2+)-binding residues include Asp-103 and Asp-107. Dimethylallyl diphosphate is bound by residues Arg-112 and Lys-196. N-linked (GlcNAc...) asparagine glycosylation is present at Asn-211.

It belongs to the FPP/GGPP synthase family.

It localises to the membrane. It participates in secondary metabolite biosynthesis. Its function is as follows. Prenyl transferase; part of the gene cluster that mediates the biosynthesis of the indole diterpenes janthitremanes such as shearinine K or shearinine A. The geranylgeranyl diphosphate (GGPP) synthase janG catalyzes the first step in janthitremane biosynthesis via conversion of farnesyl pyrophosphate and isopentyl pyrophosphate into geranylgeranyl pyrophosphate (GGPP). Condensation of indole-3-glycerol phosphate with GGPP by the prenyl transferase janC then forms 3-geranylgeranylindole (3-GGI). Epoxidation by the FAD-dependent monooxygenase janM leads to a epoxidized-GGI that is substrate of the terpene cyclase janB for cyclization to yield paspaline. Paspaline is subsequently converted to 13-desoxypaspaline by the cytochrome P450 monooxygenase janP, via beta-PC-M6 in a series of alpha-face oxidations. The cytochrome P450 monooxygenase janQ is proposed to carry out sequential beta-face oxidation steps at C-7 and C-13 of 13-desoxypaspaline to form paspalicine and paspalinine respectively. The indole diterpene prenyltransferase janD may then convert paspalinine into shearinine K which is substrate of janO and/or additional enzymes for oxidation and cyclization to generate shearinine A. The protein is Prenyl transferase janC of Penicillium janthinellum (Penicillium vitale).